A 526-amino-acid polypeptide reads, in one-letter code: Exodeoxyribonuclease 7 large subunit (526 aa).

Residues 497–526 (AMTTEGGTPPGGAKKRSTKPAEPTKQGSLF) are disordered.

It belongs to the XseA family. Heterooligomer composed of large and small subunits.

It localises to the cytoplasm. The enzyme catalyses Exonucleolytic cleavage in either 5'- to 3'- or 3'- to 5'-direction to yield nucleoside 5'-phosphates.. In terms of biological role, bidirectionally degrades single-stranded DNA into large acid-insoluble oligonucleotides, which are then degraded further into small acid-soluble oligonucleotides. The chain is Exodeoxyribonuclease 7 large subunit from Rhizobium etli (strain ATCC 51251 / DSM 11541 / JCM 21823 / NBRC 15573 / CFN 42).